We begin with the raw amino-acid sequence, 361 residues long: MVLDSTLREGEQTPGVNYTPEQRLEIAIALDEVGVDFIEIGHPAVSEDVFRGMKLIAEQGLNVELLAHSRALIEDIDYVLKTGVDWVGIFFCLSEACLRKRFRITLDHALEKISRAIEYAKDHGLKVRFTPEDTTRTEWANLKRAIRLAKELKVDRISVADTTGSTHPLRFYTLVKKIVNFGIPVNVHCHNDLGLALANAIMGIEAGATLVDATVNGLGERAGIVDLAQIITVLYYHYGIKKYRLDLLYRVSNLVSEITGISPQPNYPIVGENAFTHKAGLHVSAVLKDPRFYEFLPAEVFGRERTIYVDRYAGKDTIRYYLEKFGIRDHGIVTSLLRKVKSSREPFTWEKLLEEARRVKE.

One can recognise a Pyruvate carboxyltransferase domain in the interval 1-251 (MVLDSTLREG…KYRLDLLYRV (251 aa)). Arg8 is a 2-oxoglutarate binding site. Glu9 provides a ligand contact to Mg(2+). His68, Arg128, and Thr162 together coordinate 2-oxoglutarate. The Mg(2+) site is built by His188 and His190. The active-site Proton acceptor is His282.

This sequence belongs to the alpha-IPM synthase/homocitrate synthase family. Homocitrate synthase LYS20/LYS21 subfamily. Requires Mg(2+) as cofactor. It depends on Mn(2+) as a cofactor.

It catalyses the reaction acetyl-CoA + 2-oxoglutarate + H2O = (2R)-homocitrate + CoA + H(+). It functions in the pathway amino-acid biosynthesis; L-lysine biosynthesis via AAA pathway; L-alpha-aminoadipate from 2-oxoglutarate: step 1/5. Functionally, catalyzes the aldol-type condensation of 2-oxoglutarate with acetyl-CoA to yield homocitrate. Carries out the first step of the alpha-aminoadipate (AAA) lysine biosynthesis pathway. The polypeptide is Homocitrate synthase (Pyrococcus abyssi (strain GE5 / Orsay)).